The following is a 314-amino-acid chain: 4-hydroxy-3-methylbut-2-enyl diphosphate reductase (314 aa).

C12 serves as a coordination point for [4Fe-4S] cluster. (2E)-4-hydroxy-3-methylbut-2-enyl diphosphate is bound by residues H43 and H81. Dimethylallyl diphosphate is bound by residues H43 and H81. H43 and H81 together coordinate isopentenyl diphosphate. C103 is a [4Fe-4S] cluster binding site. H131 lines the (2E)-4-hydroxy-3-methylbut-2-enyl diphosphate pocket. H131 lines the dimethylallyl diphosphate pocket. H131 serves as a coordination point for isopentenyl diphosphate. E133 acts as the Proton donor in catalysis. Position 170 (T170) interacts with (2E)-4-hydroxy-3-methylbut-2-enyl diphosphate. Position 198 (C198) interacts with [4Fe-4S] cluster. (2E)-4-hydroxy-3-methylbut-2-enyl diphosphate contacts are provided by S226, N228, and S271. Dimethylallyl diphosphate contacts are provided by S226, N228, and S271. 3 residues coordinate isopentenyl diphosphate: S226, N228, and S271.

The protein belongs to the IspH family. Requires [4Fe-4S] cluster as cofactor.

It catalyses the reaction isopentenyl diphosphate + 2 oxidized [2Fe-2S]-[ferredoxin] + H2O = (2E)-4-hydroxy-3-methylbut-2-enyl diphosphate + 2 reduced [2Fe-2S]-[ferredoxin] + 2 H(+). The enzyme catalyses dimethylallyl diphosphate + 2 oxidized [2Fe-2S]-[ferredoxin] + H2O = (2E)-4-hydroxy-3-methylbut-2-enyl diphosphate + 2 reduced [2Fe-2S]-[ferredoxin] + 2 H(+). It participates in isoprenoid biosynthesis; dimethylallyl diphosphate biosynthesis; dimethylallyl diphosphate from (2E)-4-hydroxy-3-methylbutenyl diphosphate: step 1/1. It functions in the pathway isoprenoid biosynthesis; isopentenyl diphosphate biosynthesis via DXP pathway; isopentenyl diphosphate from 1-deoxy-D-xylulose 5-phosphate: step 6/6. Catalyzes the conversion of 1-hydroxy-2-methyl-2-(E)-butenyl 4-diphosphate (HMBPP) into a mixture of isopentenyl diphosphate (IPP) and dimethylallyl diphosphate (DMAPP). Acts in the terminal step of the DOXP/MEP pathway for isoprenoid precursor biosynthesis. In Bacillus pumilus (strain SAFR-032), this protein is 4-hydroxy-3-methylbut-2-enyl diphosphate reductase.